We begin with the raw amino-acid sequence, 275 residues long: Tumor necrosis factor-inducible gene 6 protein (275 aa).

The signal sequence occupies residues 1 to 17; the sequence is MVVLLCLCVLLWEEAHG. Residues 36–129 enclose the Link domain; the sequence is GVYHREARAG…SERWDAYCYN (94 aa). Intrachain disulfides connect Cys58-Cys127, Cys82-Cys103, and Cys135-Cys161. A glycan (N-linked (GlcNAc...) asparagine) is linked at Asn118. One can recognise a CUB domain in the interval 135–247; that stretch reads CGGVFTDPKR…GGFQIKYVTV (113 aa). Ca(2+) is bound by residues Glu183, Asp191, Asp232, Ser234, and Val235. Cys188 and Cys210 are joined by a disulfide. Positions 253–264 are enriched in polar residues; it reads SSQAKNTSTTGN. A disordered region spans residues 253 to 275; it reads SSQAKNTSTTGNKKFLPGRFSHL. Residue Asn258 is glycosylated (N-linked (GlcNAc...) asparagine).

Interacts (via Link domain) with inter-alpha-inhibitor (I-alpha-I) component bikunin. Interacts with ITIH2/HC2; this interaction is required for transesterification of the HC to hyaluronan. Interacts (via Link and CUB domains) with ITIH1. Chondroitin sulfate may be required for the stability of the complex. Interacts (via Link domain) with various C-X-C and C-C chemokines including PF4, CXCL8, CXCL11, CXCL12, CCL2, CCL7, CCL19, CCL21, and CCL27; this interaction interferes with chemokine binding to glycosaminoglycans. Interacts (primarily via Link domain) with BMP2; this interaction is inhibited by hyaluronan. Interacts (via both Link and CUB domains) with TNFSF11. Interacts (via CUB domain) with FN1 (via type III repeats 9-14); this interaction enhances fibronectin fibril assembly. TNFAIP6 may act as a bridging molecule between FN1 and THBS1. As to expression, expressed in epiphyseal and metaphyseal bone marrow of both the femur and tibia (at protein level).

The protein localises to the secreted. Functionally, major regulator of extracellular matrix organization during tissue remodeling. Catalyzes the transfer of a heavy chain (HC) from inter-alpha-inhibitor (I-alpha-I) complex to hyaluronan. Cleaves the ester bond between the C-terminus of the HC and GalNAc residue of the chondroitin sulfate chain in I-alpha-I complex followed by transesterification of the HC to hyaluronan. In the process, potentiates the antiprotease function of I-alpha-I complex through release of free bikunin. Acts as a catalyst in the formation of hyaluronan-HC oligomers and hyaluronan-rich matrix surrounding the cumulus cell-oocyte complex, a necessary step for oocyte fertilization. Assembles hyaluronan in pericellular matrices that serve as platforms for receptor clustering and signaling. Enables binding of hyaluronan deposited on the surface of macrophages to LYVE1 on lymphatic endothelium and facilitates macrophage extravasation. Alters hyaluronan binding to functionally latent CD44 on vascular endothelium, switching CD44 into an active state that supports leukocyte rolling. Modulates the interaction of chemokines with extracellular matrix components and proteoglycans on endothelial cell surface, likely preventing chemokine gradient formation. In a negative feedback mechanism, may limit excessive neutrophil recruitment at inflammatory sites by antagonizing the association of CXCL8 with glycosaminoglycans on vascular endothelium. Has a role in osteogenesis and bone remodeling. Inhibits BMP2-dependent differentiation of mesenchymal stem cell to osteoblasts. Protects against bone erosion during inflammation by inhibiting TNFSF11/RANKL-dependent osteoclast activation. The polypeptide is Tumor necrosis factor-inducible gene 6 protein (Tnfaip6) (Mus musculus (Mouse)).